Here is a 258-residue protein sequence, read N- to C-terminus: Tetraspanin-18B (258 aa).

The Cytoplasmic segment spans residues 1-25 (MGLGEASARGTSMEGDCLSCIKYLM). The helical transmembrane segment at 26–46 (FVFNFLIFLGGSFLLGVGVWV) threads the bilayer. Over 47–61 (VVDPTGFREIVAANP) the chain is Extracellular. A helical transmembrane segment spans residues 62 to 82 (LLFTGVYIILAMGGMLFLLGF). Residues 83 to 94 (LGCCGAIRENKC) lie on the Cytoplasmic side of the membrane. The chain crosses the membrane as a helical span at residues 95 to 115 (LLLFFFMLILIIFLAELAAAI). Over 116–228 (LAFIFREHLT…SAVVDYFEMY (113 aa)) the chain is Extracellular. N-linked (GlcNAc...) asparagine glycosylation occurs at N141. The chain crosses the membrane as a helical span at residues 229-249 (IYVAGALAIVVLTIELFAMVF). Topologically, residues 250–258 (AMCLFRGIQ) are cytoplasmic.

It belongs to the tetraspanin (TM4SF) family.

It is found in the membrane. Functionally, may regulate angiogenesis through KDR/VEGFR2 and NOTCH1 pathways. In Danio rerio (Zebrafish), this protein is Tetraspanin-18B (tspan18b).